A 390-amino-acid chain; its full sequence is Probable purine permease 7 (390 aa).

10 helical membrane-spanning segments follow: residues 42–62, 74–94, 110–130, 131–151, 169–189, 205–225, 244–264, 286–306, 312–332, and 341–361; these read WLRV…ATIL, TYVV…FRFF, SPSF…VSAY, AYLS…LILA, FTPL…LLVV, VIGF…LSLI, LAIY…FASG, TLAS…GLIF, FSNS…VIVF, and IFSI…HYLD.

Belongs to the purine permeases (TC 2.A.7.14) family.

The protein resides in the membrane. This chain is Probable purine permease 7 (PUP7), found in Arabidopsis thaliana (Mouse-ear cress).